A 221-amino-acid chain; its full sequence is Small ribosomal subunit protein uS5 (221 aa).

The interval 1-40 (MMAQRNSGAPDNAGGSNDGREGGRGRRDNRDDRRGGRDNA) is disordered. Residues 18–40 (DGREGGRGRRDNRDDRRGGRDNA) are compositionally biased toward basic and acidic residues. The S5 DRBM domain occupies 45 to 108 (YLERVVTINR…DEARKNFFRV (64 aa)).

This sequence belongs to the universal ribosomal protein uS5 family. As to quaternary structure, part of the 30S ribosomal subunit. Contacts proteins S4 and S8.

With S4 and S12 plays an important role in translational accuracy. Its function is as follows. Located at the back of the 30S subunit body where it stabilizes the conformation of the head with respect to the body. In Mycobacteroides abscessus (strain ATCC 19977 / DSM 44196 / CCUG 20993 / CIP 104536 / JCM 13569 / NCTC 13031 / TMC 1543 / L948) (Mycobacterium abscessus), this protein is Small ribosomal subunit protein uS5.